Consider the following 140-residue polypeptide: 3-hydroxyacyl-[acyl-carrier-protein] dehydratase FabZ (140 aa).

Residue histidine 47 is part of the active site.

Belongs to the thioester dehydratase family. FabZ subfamily.

The protein localises to the cytoplasm. It catalyses the reaction a (3R)-hydroxyacyl-[ACP] = a (2E)-enoyl-[ACP] + H2O. In terms of biological role, involved in unsaturated fatty acids biosynthesis. Catalyzes the dehydration of short chain beta-hydroxyacyl-ACPs and long chain saturated and unsaturated beta-hydroxyacyl-ACPs. This Streptococcus suis (strain 98HAH33) protein is 3-hydroxyacyl-[acyl-carrier-protein] dehydratase FabZ.